A 395-amino-acid polypeptide reads, in one-letter code: Receptor-like cytoplasmic kinase 176 (395 aa).

The interval 1 to 45 (MGNCWGAKISSESPCRSASSPSGGTSKYASNSSVSAASVPPTPRS) is disordered. Low complexity-rich tracts occupy residues 10–22 (SSES…SSPS) and 29–39 (ASNSSVSAASV). The Protein kinase domain occupies 70-355 (FRPDSVLGEG…EQVVAVLEQL (286 aa)). Residues 76–84 (LGEGGFGSV) and Lys108 contribute to the ATP site. Asp205 serves as the catalytic Proton acceptor. The interval 359–395 (KETGANPQLQKKSSSKNAGSNGSKPSSKGKPANARLV) is disordered. Low complexity predominate over residues 369-395 (KKSSSKNAGSNGSKPSSKGKPANARLV).

The protein belongs to the protein kinase superfamily. Ser/Thr protein kinase family. In terms of assembly, interacts with CERK1.

The catalysed reaction is L-seryl-[protein] + ATP = O-phospho-L-seryl-[protein] + ADP + H(+). The enzyme catalyses L-threonyl-[protein] + ATP = O-phospho-L-threonyl-[protein] + ADP + H(+). Functions downstream of CERK1 in the microbial peptidoglycans (PGNs) and fungal chitin signaling pathways that mediate innate immunity. Participates in the activation of defense genes during response to PGN and chitin. This chain is Receptor-like cytoplasmic kinase 176, found in Oryza sativa subsp. japonica (Rice).